We begin with the raw amino-acid sequence, 94 residues long: Co-chaperonin GroES (94 aa).

The protein belongs to the GroES chaperonin family. As to quaternary structure, heptamer of 7 subunits arranged in a ring. Interacts with the chaperonin GroEL.

Its subcellular location is the cytoplasm. Functionally, together with the chaperonin GroEL, plays an essential role in assisting protein folding. The GroEL-GroES system forms a nano-cage that allows encapsulation of the non-native substrate proteins and provides a physical environment optimized to promote and accelerate protein folding. GroES binds to the apical surface of the GroEL ring, thereby capping the opening of the GroEL channel. The protein is Co-chaperonin GroES of Bacillus pumilus (strain SAFR-032).